We begin with the raw amino-acid sequence, 182 residues long: Transcription termination/antitermination protein NusG (182 aa).

Residues 131-163 enclose the KOW domain; that stretch reads VGEQVRIQSGPFANQIGEVQEIEADKFKLTVLV.

It belongs to the NusG family.

In terms of biological role, participates in transcription elongation, termination and antitermination. The chain is Transcription termination/antitermination protein NusG from Staphylococcus epidermidis (strain ATCC 35984 / DSM 28319 / BCRC 17069 / CCUG 31568 / BM 3577 / RP62A).